Consider the following 796-residue polypeptide: Nuclear GTPase SLIP-GC (796 aa).

107 to 114 (GITGAGKS) lines the GTP pocket. Coiled coils occupy residues 158-185 (SDQE…EEAD) and 742-776 (GLCK…LRRS).

The protein resides in the nucleus speckle. In terms of biological role, nuclear GTPase found in germinal center B-cells, where it may inhibit function of the activation-induced cytidine deaminase AICDA. Reduces somatic hypermutation in B-cells which may enhance genome stability. This Mus musculus (Mouse) protein is Nuclear GTPase SLIP-GC.